A 380-amino-acid chain; its full sequence is Lipid-A-disaccharide synthase (380 aa).

Belongs to the LpxB family.

It catalyses the reaction a lipid X + a UDP-2-N,3-O-bis[(3R)-3-hydroxyacyl]-alpha-D-glucosamine = a lipid A disaccharide + UDP + H(+). It functions in the pathway bacterial outer membrane biogenesis; LPS lipid A biosynthesis. Functionally, condensation of UDP-2,3-diacylglucosamine and 2,3-diacylglucosamine-1-phosphate to form lipid A disaccharide, a precursor of lipid A, a phosphorylated glycolipid that anchors the lipopolysaccharide to the outer membrane of the cell. In Vibrio vulnificus (strain CMCP6), this protein is Lipid-A-disaccharide synthase.